The chain runs to 794 residues: E3 ubiquitin-protein ligase wwp-1 (794 aa).

Positions methionine 1–serine 16 are enriched in low complexity. 2 disordered regions span residues methionine 1–lysine 31 and arginine 155–threonine 198. In terms of domain architecture, C2 spans glutamine 10–asparagine 124. Positions asparagine 17–alanine 27 are enriched in polar residues. The segment covering alanine 161–proline 186 has biased composition (low complexity). WW domains lie at glutamate 219–threonine 252, glutamine 253–alanine 286, glycine 324–threonine 358, and glutamine 366–threonine 399. The region spanning asparagine 460–glutamate 794 is the HECT domain. Cysteine 762 serves as the catalytic Glycyl thioester intermediate.

Interacts (via WW domains) with Kruppel-like factor klf-1. Interacts with ubiquitin-conjugating enzyme E2 ubc-18. As to expression, expressed in neurons localized in the head and tail of adults.

It carries out the reaction S-ubiquitinyl-[E2 ubiquitin-conjugating enzyme]-L-cysteine + [acceptor protein]-L-lysine = [E2 ubiquitin-conjugating enzyme]-L-cysteine + N(6)-ubiquitinyl-[acceptor protein]-L-lysine.. The protein operates within protein modification; protein ubiquitination. Functionally, E3 ubiquitin-protein ligase which accepts ubiquitin from an E2 ubiquitin-conjugating enzyme in the form of a thioester and then directly transfers the ubiquitin to targeted substrates. Ubiquitinates klf-1. Required for diet restriction-mediated lifespan extension, acting in concert with Kruppel-like factor klf-1 in the intestine to perhaps modulate genes involved in lipid metabolism. Probably acting downstream of the Insulin/IGF-1-like signaling (IIS) mediated pathway, plays a role in the immune response to infection by the Gram-negative bacterium P.aeruginosa, at least partly in response to bacterial pore-forming toxins. This Caenorhabditis elegans protein is E3 ubiquitin-protein ligase wwp-1.